The following is a 215-amino-acid chain: Ras-related protein Rab-5B (215 aa).

Residues serine 29, alanine 30, glycine 32, lysine 33, serine 34, serine 35, histidine 46, glutamate 47, threonine 52, glycine 78, asparagine 133, lysine 134, aspartate 136, alanine 164, and lysine 165 each coordinate GTP. Serine 34 provides a ligand contact to Mg(2+). 2 short sequence motifs (switch) span residues 44–56 and 77–93; these read QFHE…IGAA and AGQE…YRGA. Position 52 (threonine 52) interacts with Mg(2+). The tract at residues 184–215 is disordered; that stretch reads SEPQSTSGAAGRSRGVDLHEQTQQNKSQCCSN. The span at 204–215 shows a compositional bias: polar residues; the sequence is QTQQNKSQCCSN. S-geranylgeranyl cysteine attachment occurs at residues cysteine 212 and cysteine 213.

The protein belongs to the small GTPase superfamily. Rab family. Mg(2+) is required as a cofactor.

It is found in the cell membrane. It localises to the early endosome membrane. It catalyses the reaction GTP + H2O = GDP + phosphate + H(+). With respect to regulation, regulated by guanine nucleotide exchange factors (GEFs) which promote the exchange of bound GDP for free GTP. Regulated by GTPase activating proteins (GAPs) which increase the GTP hydrolysis activity. Inhibited by GDP dissociation inhibitors (GDIs). The small GTPases Rab are key regulators of intracellular membrane trafficking, from the formation of transport vesicles to their fusion with membranes. Rabs cycle between an inactive GDP-bound form and an active GTP-bound form that is able to recruit to membranes different sets of downstream effectors directly responsible for vesicle formation, movement, tethering and fusion. The sequence is that of Ras-related protein Rab-5B (RAB5B) from Gallus gallus (Chicken).